The primary structure comprises 276 residues: Large ribosomal subunit protein uL2 (276 aa).

A disordered region spans residues 208 to 276; sequence KAGRNRHRGI…KLIISRRKGK (69 aa). Residues 230–240 are compositionally biased toward basic and acidic residues; that stretch reads DHPHGGGEGKK. Residues 255–276 are compositionally biased toward basic residues; it reads KGAKTRRKKASDKLIISRRKGK.

Belongs to the universal ribosomal protein uL2 family. Part of the 50S ribosomal subunit. Forms a bridge to the 30S subunit in the 70S ribosome.

One of the primary rRNA binding proteins. Required for association of the 30S and 50S subunits to form the 70S ribosome, for tRNA binding and peptide bond formation. It has been suggested to have peptidyltransferase activity; this is somewhat controversial. Makes several contacts with the 16S rRNA in the 70S ribosome. In Campylobacter lari (strain RM2100 / D67 / ATCC BAA-1060), this protein is Large ribosomal subunit protein uL2.